The chain runs to 318 residues: MPREDRATWKSNYFLKIIQLLDDYPKCFIVGADNVGSKQMQQIRMSLRGKAVVLMGKNTMMRKAIRGHLENNPALEKLLPHIRGNVGFVFTKEDLTEIRDMLLANKVPAAARAGAIAPCEVTVPAQNTGLGPEKTSFFQALGITTKISRGTIEILSDVQLIKTGDKVGASEATLLNMLNISPFSFGLIIQQVFDNGSIYNPEVLDITEETLHSRFLEGVRNVASVCLQIGYPTVASVPHSIINGYKRVLALSVETDYTFPLAEKVKAFLADPSAFVAAAPVAAATTAAPAAAAAAPAKVEAKEESEESDEDMGFGLFD.

Tyrosine 24 is subject to Phosphotyrosine. Threonine 59 is subject to Phosphothreonine. Residue lysine 264 forms a Glycyl lysine isopeptide (Lys-Gly) (interchain with G-Cter in ubiquitin) linkage. A Glycyl lysine isopeptide (Lys-Gly) (interchain with G-Cter in SUMO1); alternate cross-link involves residue lysine 298. A Glycyl lysine isopeptide (Lys-Gly) (interchain with G-Cter in SUMO2); alternate cross-link involves residue lysine 298. Residues lysine 298–aspartate 318 are disordered. A compositionally biased stretch (acidic residues) spans glutamate 303–methionine 312. A phosphoserine mark is found at serine 305 and serine 308.

Belongs to the universal ribosomal protein uL10 family. In terms of assembly, P0 forms a pentameric complex by interaction with dimers of P1 and P2. Identified in a IGF2BP1-dependent mRNP granule complex containing untranslated mRNAs. Interacts with APEX1. Interacts with FMR1. Post-translationally, ubiquitinated at Lys-264 by RNF14 and RNF25 in response to ribosome collisions (ribosome stalling).

It is found in the nucleus. Its subcellular location is the cytoplasm. Ribosomal protein P0 is the functional equivalent of E.coli protein L10. This chain is Large ribosomal subunit protein uL10 (RPLP0), found in Sus scrofa (Pig).